Here is a 132-residue protein sequence, read N- to C-terminus: Agouti-signaling protein (132 aa).

A signal peptide spans 1 to 22; that stretch reads MDVTRLLLATLLVFLCFFTAYS. N-linked (GlcNAc...) asparagine glycosylation occurs at asparagine 39. The segment at 62–88 is disordered; the sequence is ISRKEAEKKRSSKKEASMKKVARPRTP. Positions 63–79 are enriched in basic and acidic residues; the sequence is SRKEAEKKRSSKKEASM. Disulfide bonds link cysteine 93/cysteine 108, cysteine 100/cysteine 114, cysteine 107/cysteine 125, cysteine 111/cysteine 132, and cysteine 116/cysteine 123. Residues 93–132 enclose the Agouti domain; sequence CVATRDSCKPPAPACCDPCASCQCRFFRSACSCRVLSLNC.

It is found in the secreted. In terms of biological role, involved in the regulation of melanogenesis. The binding of ASP to MC1R precludes alpha-MSH initiated signaling and thus blocks production of cAMP, leading to a down-regulation of eumelanogenesis (brown/black pigment) and thus increasing synthesis of pheomelanin (yellow/red pigment). This Macaca radiata (Bonnet macaque) protein is Agouti-signaling protein (ASIP).